The sequence spans 126 residues: Nuclear transport factor 2B (126 aa).

S2 carries the N-acetylserine modification. The NTF2 domain occupies 9 to 123; the sequence is VSKAFVEHYY…FYVFNDIFRL (115 aa).

Interacts with RAN1. In terms of tissue distribution, expressed in roots, stems, leaves and flowers, and, at low levels, in siliques.

The protein localises to the cytoplasm. The protein resides in the nucleus. Its subcellular location is the nucleus envelope. Functionally, facilitates protein transport into the nucleus. Interacts with various nucleoporins and with Ran-GDP. Could be part of a multicomponent system of cytosolic factors that assemble at the pore complex during nuclear import. The protein is Nuclear transport factor 2B of Arabidopsis thaliana (Mouse-ear cress).